Here is a 126-residue protein sequence, read N- to C-terminus: Adenosine 5'-monophosphoramidase HINT1 (126 aa).

A2 carries the post-translational modification N-acetylalanine. The HIT domain occupies 18 to 126; that stretch reads IFGKIIRKEI…GGRQMHWPPG (109 aa). 2 positions are modified to N6-acetyllysine: K21 and K30. 43–44 lines the AMP pocket; sequence DI. 2 positions are modified to phosphoserine: S45 and S72. AMP contacts are provided by residues N99, 105–107, and 112–114; these read GQS and HLH. Residues 110–114 carry the Histidine triad motif motif; it reads HVHLH. The Tele-AMP-histidine intermediate role is filled by H112.

This sequence belongs to the HINT family. In terms of assembly, homodimer. Interacts with CDK7. Interacts with RUVBL1 and RUVBL2 and is associated with the LEF1/TCF1-CTNNB1 complex and with a KAT5 histone acetyltransferase complex. Identified in a complex with MITF and CTNNB1. Interacts with CDC34 and RBX1, and is part of a SCF (SKP2-CUL1-F-box protein) E3 ubiquitin-protein ligase complex. Interacts with SUMO1, SUMO2 and RGS17. Interacts with the Ten-1 ICD form of TENM1. Interacts with CALM1; interaction increases in the presence of calcium ions.

It is found in the cytoplasm. Its subcellular location is the nucleus. It catalyses the reaction adenosine 5'-phosphoramidate + H2O = AMP + NH4(+). Exhibits adenosine 5'-monophosphoramidase activity, hydrolyzing purine nucleotide phosphoramidates with a single phosphate group such as adenosine 5'monophosphoramidate (AMP-NH2) to yield AMP and NH2. Hydrolyzes adenosine 5'monophosphomorpholidate (AMP-morpholidate) and guanosine 5'monophosphomorpholidate (GMP-morpholidate). Hydrolyzes lysyl-AMP (AMP-N-epsilon-(N-alpha-acetyl lysine methyl ester)) generated by lysine tRNA ligase, as well as Met-AMP, His-AMP and Asp-AMP, lysyl-GMP (GMP-N-epsilon-(N-alpha-acetyl lysine methyl ester)) and AMP-N-alanine methyl ester. Can also convert adenosine 5'-O-phosphorothioate and guanosine 5'-O-phosphorothioate to the corresponding nucleoside 5'-O-phosphates with concomitant release of hydrogen sulfide. In addition, functions as a scaffolding protein that modulates transcriptional activation by the LEF1/TCF1-CTNNB1 complex and by the complex formed with MITF and CTNNB1. Modulates p53/TP53 levels and p53/TP53-mediated apoptosis. Modulates proteasomal degradation of target proteins by the SCF (SKP2-CUL1-F-box protein) E3 ubiquitin-protein ligase complex. Also exhibits SUMO-specific isopeptidase activity, deconjugating SUMO1 from RANGAP1 and RGS17. The protein is Adenosine 5'-monophosphoramidase HINT1 (HINT1) of Pongo abelii (Sumatran orangutan).